Here is a 221-residue protein sequence, read N- to C-terminus: GTPase Obg (221 aa).

Positions 1–61 constitute an OBG-type G domain; sequence PSALRLVLLN…LKYKLLEIVQ (61 aa). GTP contacts are provided by residues 10 to 13 and 42 to 44; these read NKAD and SAV. The region spanning 82-162 is the OCT domain; the sequence is VVHRTKGQFQ…IGGISFEWEP (81 aa).

This sequence belongs to the TRAFAC class OBG-HflX-like GTPase superfamily. OBG GTPase family. Monomer. Requires Mg(2+) as cofactor.

It is found in the cytoplasm. An essential GTPase which binds GTP, GDP and possibly (p)ppGpp with moderate affinity, with high nucleotide exchange rates and a fairly low GTP hydrolysis rate. Plays a role in control of the cell cycle, stress response, ribosome biogenesis and in those bacteria that undergo differentiation, in morphogenesis control. This chain is GTPase Obg, found in Corynebacterium melassecola.